The primary structure comprises 365 residues: U1 snRNP-associated protein usp109 (365 aa).

RRM domains follow at residues Thr3–Glu79, Tyr86–Ser162, and Thr189–Pro259.

In terms of assembly, component of the U1 snRNP complex.

It localises to the nucleus. The polypeptide is U1 snRNP-associated protein usp109 (usp109) (Schizosaccharomyces pombe (strain 972 / ATCC 24843) (Fission yeast)).